Reading from the N-terminus, the 125-residue chain is Small ribosomal subunit protein uS13 (125 aa).

A disordered region spans residues 93–125 (RSLPVRGQRTRTNARTRKGKRKTVAGKKKAGKK).

This sequence belongs to the universal ribosomal protein uS13 family. As to quaternary structure, part of the 30S ribosomal subunit. Forms a loose heterodimer with protein S19. Forms two bridges to the 50S subunit in the 70S ribosome.

Located at the top of the head of the 30S subunit, it contacts several helices of the 16S rRNA. In the 70S ribosome it contacts the 23S rRNA (bridge B1a) and protein L5 of the 50S subunit (bridge B1b), connecting the 2 subunits; these bridges are implicated in subunit movement. Contacts the tRNAs in the A and P-sites. The chain is Small ribosomal subunit protein uS13 from Chlorobaculum tepidum (strain ATCC 49652 / DSM 12025 / NBRC 103806 / TLS) (Chlorobium tepidum).